A 371-amino-acid chain; its full sequence is Maltose/maltodextrin import ATP-binding protein MalK (371 aa).

The ABC transporter domain maps to 4-234 (VQLQNVTKAW…PADRFVAGFI (231 aa)). 36-43 (GPSGCGKS) provides a ligand contact to ATP.

The protein belongs to the ABC transporter superfamily. Maltooligosaccharide importer (TC 3.A.1.1.1) family. As to quaternary structure, the complex is composed of two ATP-binding proteins (MalK), two transmembrane proteins (MalG and MalK) and a solute-binding protein (MalE).

The protein localises to the cell inner membrane. The enzyme catalyses D-maltose(out) + ATP + H2O = D-maltose(in) + ADP + phosphate + H(+). In terms of biological role, part of the ABC transporter complex MalEFGK involved in maltose/maltodextrin import. Responsible for energy coupling to the transport system. The sequence is that of Maltose/maltodextrin import ATP-binding protein MalK from Escherichia coli O6:H1 (strain CFT073 / ATCC 700928 / UPEC).